Consider the following 729-residue polypeptide: Transcriptional activator ptaB (729 aa).

Residues 1–12 show a composition bias toward pro residues; that stretch reads MPQHPGLPPGHP. 4 disordered regions span residues 1–69, 207–341, 505–538, and 614–729; these read MPQH…QAHA, AAAA…QNQA, LELSEQKQSPKVSKNLGKRAQQKQAQQAAPSLPE, and RGPQ…KGTA. Positions 38–56 are enriched in low complexity; that stretch reads PGGPQVTQGGPMMGMPPGA. Pro residues predominate over residues 272–285; the sequence is APQPHPTPNPPPQQ. 2 stretches are compositionally biased toward low complexity: residues 286–300 and 307–341; these read LPQAQQPGQQPHQQP and QPQQQQSQQGQPQGQQQQMTPQEAQMKAQQTQNQA. Positions 614 to 625 are enriched in polar residues; that stretch reads RGPQMNGPNQFA. The segment covering 655-671 has biased composition (low complexity); the sequence is GPPGMVQQGQMQPNVGQ. Over residues 672–682 the composition is skewed to polar residues; sequence ATSASASPQVT.

Belongs to the MFG1 family. Interacts with somA.

It localises to the nucleus. Its function is as follows. Transcriptional regulator that forms a complex with somA to control biofilm formation. This chain is Transcriptional activator ptaB, found in Aspergillus fumigatus (strain ATCC MYA-4609 / CBS 101355 / FGSC A1100 / Af293) (Neosartorya fumigata).